A 136-amino-acid polypeptide reads, in one-letter code: MGKDTIADLLTSIRNADMNKKGTVRVVSTNITENIVKILLREGFIESVRKHQERNRYFLVSTLRHQKRKTRKGIYRTRTFLKRISRPGLRIYTNYQGIPKVLGGMGIAILSTSRGIMTDREARLNRIGGEVLCYIW.

It belongs to the universal ribosomal protein uS8 family. In terms of assembly, part of the 30S ribosomal subunit.

It is found in the plastid. The protein resides in the chloroplast. One of the primary rRNA binding proteins, it binds directly to 16S rRNA central domain where it helps coordinate assembly of the platform of the 30S subunit. The chain is Small ribosomal subunit protein uS8c (rps8) from Agrostis stolonifera (Creeping bentgrass).